The following is a 143-amino-acid chain: Transcription antitermination protein NusB (143 aa).

This sequence belongs to the NusB family.

Its function is as follows. Involved in transcription antitermination. Required for transcription of ribosomal RNA (rRNA) genes. Binds specifically to the boxA antiterminator sequence of the ribosomal RNA (rrn) operons. The protein is Transcription antitermination protein NusB of Desulforapulum autotrophicum (strain ATCC 43914 / DSM 3382 / VKM B-1955 / HRM2) (Desulfobacterium autotrophicum).